Consider the following 435-residue polypeptide: Arginine biosynthesis bifunctional protein ArgJ, mitochondrial (435 aa).

6 residues coordinate substrate: Thr179, Lys205, Thr216, Glu302, Asn430, and Ser435. Thr216 acts as the Nucleophile in catalysis.

Belongs to the ArgJ family. In terms of assembly, heterodimer of an alpha and a beta chain. In terms of processing, the alpha and beta chains are autoproteolytically processed from a single precursor protein within the mitochondrion.

The protein resides in the mitochondrion matrix. It carries out the reaction N(2)-acetyl-L-ornithine + L-glutamate = N-acetyl-L-glutamate + L-ornithine. It catalyses the reaction L-glutamate + acetyl-CoA = N-acetyl-L-glutamate + CoA + H(+). The protein operates within amino-acid biosynthesis; L-arginine biosynthesis; L-ornithine and N-acetyl-L-glutamate from L-glutamate and N(2)-acetyl-L-ornithine (cyclic): step 1/1. It functions in the pathway amino-acid biosynthesis; L-arginine biosynthesis; N(2)-acetyl-L-ornithine from L-glutamate: step 1/4. Catalyzes two activities which are involved in the cyclic version of arginine biosynthesis: the synthesis of acetylglutamate from glutamate and acetyl-CoA, and of ornithine by transacetylation between acetylornithine and glutamate. The protein is Arginine biosynthesis bifunctional protein ArgJ, mitochondrial of Schizosaccharomyces japonicus (strain yFS275 / FY16936) (Fission yeast).